A 149-amino-acid chain; its full sequence is Protein-export protein SecB (149 aa).

Belongs to the SecB family. As to quaternary structure, homotetramer, a dimer of dimers. One homotetramer interacts with 1 SecA dimer.

The protein resides in the cytoplasm. Functionally, one of the proteins required for the normal export of preproteins out of the cell cytoplasm. It is a molecular chaperone that binds to a subset of precursor proteins, maintaining them in a translocation-competent state. It also specifically binds to its receptor SecA. This Acidithiobacillus ferrooxidans (strain ATCC 23270 / DSM 14882 / CIP 104768 / NCIMB 8455) (Ferrobacillus ferrooxidans (strain ATCC 23270)) protein is Protein-export protein SecB.